The primary structure comprises 261 residues: CD40 ligand (261 aa).

Residues 1 to 22 (MIETYSQPSPRSVATGPPVSMK) are Cytoplasmic-facing. A helical; Signal-anchor for type II membrane protein membrane pass occupies residues 23–46 (IFMYLLTVFLITQMIGSALFAVYL). Residues 47–261 (HRRLDKIEDE…GFTSFGLLKL (215 aa)) are Extracellular-facing. Residues 122 to 261 (IAAHVISEAS…GFTSFGLLKL (140 aa)) enclose the THD domain. A disulfide bridge links Cys178 with Cys218. The N-linked (GlcNAc...) asparagine glycan is linked to Asn240.

The protein belongs to the tumor necrosis factor family. As to quaternary structure, homotrimer. Interacts with CD28. CD40 ligand, soluble form: Exists as either a monomer or a homotrimer. Forms a ternary complex between CD40 and integrins for CD40-CD40LG signaling. Post-translationally, the soluble form derives from the membrane form by proteolytic processing.

The protein resides in the cell membrane. The protein localises to the cell surface. It localises to the secreted. Functionally, cytokine that acts as a ligand to CD40/TNFRSF5. Costimulates T-cell proliferation and cytokine production. Its cross-linking on T-cells generates a costimulatory signal which enhances the production of IL4 and IL10 in conjunction with the TCR/CD3 ligation and CD28 costimulation. Induces the activation of NF-kappa-B. Induces the activation of kinases MAPK8 and PAK2 in T-cells. Mediates B-cell proliferation in the absence of co-stimulus as well as IgE production in the presence of IL4. Involved in immunoglobulin class switching. Acts as a ligand for integrins, specifically ITGA5:ITGB1 and ITGAV:ITGB3; both integrins and the CD40 receptor are required for activation of CD40-CD40LG signaling, which have cell-type dependent effects, such as B-cell activation, NF-kappa-B signaling and anti-apoptotic signaling. The chain is CD40 ligand (CD40LG) from Bos taurus (Bovine).